The primary structure comprises 1053 residues: DNA-directed RNA polymerase subunit beta' (1053 aa).

Positions 60, 62, 75, and 78 each coordinate Zn(2+). Residues aspartate 449, aspartate 451, and aspartate 453 each contribute to the Mg(2+) site.

The protein belongs to the RNA polymerase beta' chain family. The RNAP catalytic core consists of 2 alpha, 1 beta, 1 beta' and 1 omega subunit. When a sigma factor is associated with the core the holoenzyme is formed, which can initiate transcription. Mg(2+) serves as cofactor. Requires Zn(2+) as cofactor.

The catalysed reaction is RNA(n) + a ribonucleoside 5'-triphosphate = RNA(n+1) + diphosphate. Its function is as follows. DNA-dependent RNA polymerase catalyzes the transcription of DNA into RNA using the four ribonucleoside triphosphates as substrates. The protein is DNA-directed RNA polymerase subunit beta' of Brochothrix thermosphacta (Microbacterium thermosphactum).